The following is a 1236-amino-acid chain: ATP-dependent helicase/nuclease subunit A (1236 aa).

Residues 4–473 enclose the UvrD-like helicase ATP-binding domain; sequence VKWTKEQQQA…VNLFKNFRSR (470 aa). Residue 25–32 coordinates ATP; that stretch reads AAAGSGKT. Residues 512–806 form the UvrD-like helicase C-terminal domain; sequence YEDKSLVGGP…RIMSIHKSKG (295 aa).

It belongs to the helicase family. AddA subfamily. In terms of assembly, heterodimer of AddA and AddB/RexB. Requires Mg(2+) as cofactor.

It carries out the reaction Couples ATP hydrolysis with the unwinding of duplex DNA by translocating in the 3'-5' direction.. The enzyme catalyses ATP + H2O = ADP + phosphate + H(+). In terms of biological role, the heterodimer acts as both an ATP-dependent DNA helicase and an ATP-dependent, dual-direction single-stranded exonuclease. Recognizes the chi site generating a DNA molecule suitable for the initiation of homologous recombination. The AddA nuclease domain is required for chi fragment generation; this subunit has the helicase and 3' -&gt; 5' nuclease activities. The polypeptide is ATP-dependent helicase/nuclease subunit A (Clostridium novyi (strain NT)).